Here is a 123-residue protein sequence, read N- to C-terminus: Large ribosomal subunit protein uL29 (123 aa).

This sequence belongs to the universal ribosomal protein uL29 family.

This chain is Large ribosomal subunit protein uL29 (RPL35), found in Babesia bovis.